A 488-amino-acid polypeptide reads, in one-letter code: 7,8-epoxymelianol synthase CYP88A51 (488 aa).

Residues 4–24 (NFLWPMLAMFLGSLVVMFGFL) traverse the membrane as a helical segment. Position 436 (cysteine 436) interacts with heme.

It belongs to the cytochrome P450 family. It depends on heme as a cofactor. Accumulates in mature fruits and in juice vesicles.

It localises to the membrane. The catalysed reaction is melianol + reduced [NADPH--hemoprotein reductase] + O2 = 7,8-epoxymelianol + oxidized [NADPH--hemoprotein reductase] + H2O + H(+). It functions in the pathway secondary metabolite biosynthesis; terpenoid biosynthesis. Monooxygenase involved in the biosynthesis of limonoids triterpene natural products such as limonin, a compound with insecticidal activity responsible for the bitter taste in citrus. Catalyzes the epoxidation of melianol to produce 7,8-epoxymelianol. The protein is 7,8-epoxymelianol synthase CYP88A51 of Citrus sinensis (Sweet orange).